Reading from the N-terminus, the 211-residue chain is Receptor expression-enhancing protein 6 (211 aa).

Transmembrane regions (helical) follow at residues 44–64 (LSLYLLFGYGASLLCNLIGFV) and 89–109 (WVVYALFGLAEFFSDLLLSWF). Positions 190 to 211 (AGPSTPLEADLKPSQTPQPKDK) are disordered. Over residues 202-211 (PSQTPQPKDK) the composition is skewed to polar residues.

The protein belongs to the DP1 family. Interacts with STX3. Interacts with clathrin. As to expression, expressed in circumvallate papillae and testis. Expressed in the retina. Isoform 1 is predominantly present in mature optic cups. Isoform 1 expression is confined to the cell body and inner segment of developing rod photoreceptor cells.

It localises to the endoplasmic reticulum membrane. The protein localises to the cytoplasmic vesicle. It is found in the clathrin-coated vesicle membrane. Required for correct function and survival of retinal photoreceptors. Required for retinal development. In rod photoreceptors, facilitates stability and/or trafficking of guanylate cyclases and is required to maintain endoplasmic reticulum and mitochondrial homeostasis. May play a role in clathrin-coated intracellular vesicle trafficking of proteins from the endoplasmic reticulum to the retinal rod plasma membrane. This chain is Receptor expression-enhancing protein 6 (REEP6), found in Homo sapiens (Human).